A 79-amino-acid chain; its full sequence is Large ribosomal subunit protein uL29 (79 aa).

It belongs to the universal ribosomal protein uL29 family.

The protein is Large ribosomal subunit protein uL29 of Tropheryma whipplei (strain TW08/27) (Whipple's bacillus).